A 518-amino-acid polypeptide reads, in one-letter code: Ell-associated factor Eaf (518 aa).

Composition is skewed to polar residues over residues 119–128 and 163–182; these read KTRSEMTNKP and ENST…SRRN. 2 disordered regions span residues 119-216 and 241-518; these read KTRS…PAWH and ALHN…DDDD. Phosphoserine is present on serine 192. Polar residues-rich tracts occupy residues 253-265 and 274-284; these read ANIS…SSVG and MGKQRQASSQG. Positions 289-342 are enriched in low complexity; it reads QQQTQRSSPPMQQQQQQQNYGRGGANNNYAQQLHQQQQQQQQQQLQQQQQQMQQ. The span at 343–355 shows a compositional bias: polar residues; it reads RASFSHSNHSNSM. A compositionally biased stretch (low complexity) spans 368–377; it reads AAQSMAQAAA. The segment covering 397 to 412 has biased composition (acidic residues); sequence ESSDSDSGSDSDDSTE. Low complexity-rich tracts occupy residues 418 to 428, 463 to 476, and 500 to 518; these read HQQQQPPGQLS, QQQQ…QQQQ, and NDLL…DDDD.

It belongs to the EAF family.

The protein resides in the nucleus. Promotes transcriptional elongation by Su(Tpl)/ELL. Essential for development. This is Ell-associated factor Eaf from Drosophila mojavensis (Fruit fly).